The primary structure comprises 262 residues: Aquaporin TIP3-1 (262 aa).

A run of 2 helical transmembrane segments spans residues 27–47 (AAIS…GSVL) and 61–81 (GLVA…AVAV). An NPA 1 motif is present at residues 89 to 91 (NPA). The next 3 membrane-spanning stretches (helical) occupy residues 104–124 (LVRA…ATLL), 148–168 (AVLL…ATVI), and 175–195 (VGTI…LAGG). Positions 203–205 (NPA) match the NPA 2 motif. Residues 223–243 (YWLGPFLGAGLAGLVYEYLVI) form a helical membrane-spanning segment.

The protein belongs to the MIP/aquaporin (TC 1.A.8) family. TIP (TC 1.A.8.10) subfamily.

It is found in the vacuole membrane. Its function is as follows. Aquaporins facilitate the transport of water and small neutral solutes across cell membranes. This is Aquaporin TIP3-1 (TIP3-1) from Zea mays (Maize).